The chain runs to 172 residues: Outer-membrane lipoprotein carrier protein (172 aa).

Residues 1 to 16 form the signal peptide; that stretch reads MRIALLWVAFGALALA.

It belongs to the LolA family. In terms of assembly, monomer.

It is found in the periplasm. Its function is as follows. Participates in the translocation of lipoproteins from the inner membrane to the outer membrane. Only forms a complex with a lipoprotein if the residue after the N-terminal Cys is not an aspartate (The Asp acts as a targeting signal to indicate that the lipoprotein should stay in the inner membrane). In Wolinella succinogenes (strain ATCC 29543 / DSM 1740 / CCUG 13145 / JCM 31913 / LMG 7466 / NCTC 11488 / FDC 602W) (Vibrio succinogenes), this protein is Outer-membrane lipoprotein carrier protein.